The primary structure comprises 315 residues: Aspartate carbamoyltransferase catalytic subunit (315 aa).

The carbamoyl phosphate site is built by Arg-65 and Thr-66. An L-aspartate-binding site is contributed by Lys-93. Arg-115, His-145, and Gln-148 together coordinate carbamoyl phosphate. Arg-179 and Arg-234 together coordinate L-aspartate. 2 residues coordinate carbamoyl phosphate: Gly-275 and Pro-276.

This sequence belongs to the aspartate/ornithine carbamoyltransferase superfamily. ATCase family. Heterododecamer (2C3:3R2) of six catalytic PyrB chains organized as two trimers (C3), and six regulatory PyrI chains organized as three dimers (R2).

The enzyme catalyses carbamoyl phosphate + L-aspartate = N-carbamoyl-L-aspartate + phosphate + H(+). It participates in pyrimidine metabolism; UMP biosynthesis via de novo pathway; (S)-dihydroorotate from bicarbonate: step 2/3. Functionally, catalyzes the condensation of carbamoyl phosphate and aspartate to form carbamoyl aspartate and inorganic phosphate, the committed step in the de novo pyrimidine nucleotide biosynthesis pathway. This chain is Aspartate carbamoyltransferase catalytic subunit, found in Xanthomonas euvesicatoria pv. vesicatoria (strain 85-10) (Xanthomonas campestris pv. vesicatoria).